The chain runs to 339 residues: UDP-3-O-acylglucosamine N-acyltransferase (339 aa).

The active-site Proton acceptor is the histidine 238.

Belongs to the transferase hexapeptide repeat family. LpxD subfamily. Homotrimer.

The enzyme catalyses a UDP-3-O-[(3R)-3-hydroxyacyl]-alpha-D-glucosamine + a (3R)-hydroxyacyl-[ACP] = a UDP-2-N,3-O-bis[(3R)-3-hydroxyacyl]-alpha-D-glucosamine + holo-[ACP] + H(+). It functions in the pathway bacterial outer membrane biogenesis; LPS lipid A biosynthesis. Catalyzes the N-acylation of UDP-3-O-acylglucosamine using 3-hydroxyacyl-ACP as the acyl donor. Is involved in the biosynthesis of lipid A, a phosphorylated glycolipid that anchors the lipopolysaccharide to the outer membrane of the cell. The protein is UDP-3-O-acylglucosamine N-acyltransferase of Aeromonas hydrophila subsp. hydrophila (strain ATCC 7966 / DSM 30187 / BCRC 13018 / CCUG 14551 / JCM 1027 / KCTC 2358 / NCIMB 9240 / NCTC 8049).